Here is a 133-residue protein sequence, read N- to C-terminus: Ribosomal silencing factor RsfS (133 aa).

The protein belongs to the Iojap/RsfS family. In terms of assembly, interacts with ribosomal protein uL14 (rplN).

The protein resides in the cytoplasm. Its function is as follows. Functions as a ribosomal silencing factor. Interacts with ribosomal protein uL14 (rplN), blocking formation of intersubunit bridge B8. Prevents association of the 30S and 50S ribosomal subunits and the formation of functional ribosomes, thus repressing translation. This Zymomonas mobilis subsp. mobilis (strain ATCC 31821 / ZM4 / CP4) protein is Ribosomal silencing factor RsfS.